The following is a 449-amino-acid chain: UDP-glycosyltransferase 76E7 (449 aa).

UDP-alpha-D-glucose-binding positions include serine 275, 333–335 (APQ), 350–358 (HCGWNSTLE), and 372–375 (TTDQ).

This sequence belongs to the UDP-glycosyltransferase family.

This chain is UDP-glycosyltransferase 76E7 (UGT76E7), found in Arabidopsis thaliana (Mouse-ear cress).